The primary structure comprises 188 residues: MASYSTNDFKPGLKFIQDGEPCVIVENEFVKPGKGQAFTRTKIRKLISGKVLEINFKSGSTVEAADVVDYNYTYSYKDEDFWYFMHPETFEQISVDSKALGDNDKWLVDQAECIITLWNGSAIGVTPPNFVELEVIETDPGLKGDTAGTGGKPATLSTGAVVRVPLFVQIGEVIRVDTRSGEYVSRVK.

Lys34 bears the N6-(3,6-diaminohexanoyl)-5-hydroxylysine mark.

The protein belongs to the elongation factor P family. Post-translationally, may be beta-lysylated on the epsilon-amino group of Lys-34 by the combined action of EpmA and EpmB, and then hydroxylated on the C5 position of the same residue by EpmC (if this protein is present). Lysylation is critical for the stimulatory effect of EF-P on peptide-bond formation. The lysylation moiety may extend toward the peptidyltransferase center and stabilize the terminal 3-CCA end of the tRNA. Hydroxylation of the C5 position on Lys-34 may allow additional potential stabilizing hydrogen-bond interactions with the P-tRNA.

It localises to the cytoplasm. It participates in protein biosynthesis; polypeptide chain elongation. Involved in peptide bond synthesis. Alleviates ribosome stalling that occurs when 3 or more consecutive Pro residues or the sequence PPG is present in a protein, possibly by augmenting the peptidyl transferase activity of the ribosome. Modification of Lys-34 is required for alleviation. The sequence is that of Elongation factor P from Glaesserella parasuis serovar 5 (strain SH0165) (Haemophilus parasuis).